The following is a 327-amino-acid chain: Serine/threonine-protein phosphatase 4 regulatory subunit ppfr-4 (327 aa).

A coiled-coil region spans residues 141–185; that stretch reads KLAVEEIRRLKLERHKKKQELKMAELRIQKQLEAVSIDEQNLREL. The tract at residues 271–327 is disordered; sequence KFGHNPQNAPQSSAPAGAEAQESEEEVDDDEARAKAMRWDEYKDDHRRGWGNMHNKG. Over residues 275–284 the composition is skewed to polar residues; sequence NPQNAPQSSA. Residues 291 to 301 show a composition bias toward acidic residues; the sequence is QESEEEVDDDE. A compositionally biased stretch (basic and acidic residues) spans 302–318; the sequence is ARAKAMRWDEYKDDHRR.

Serine/threonine-protein phosphatase 4 (PP4) occurs in different assemblies of the catalytic and one or more regulatory subunits. The catalytic subunit is likely to be pph-4.1.

Its function is as follows. Probable regulatory subunit of serine/threonine-protein phosphatase PP4 which may play a role in meiosis and embryonic mitosis. Probably in association with catalytic subunit pph-4.1, regulates microtubule severing during oocyte meiosis II by dephosphorylating and likely activating mei-1, a component of the katanin microtubule severing complex. This Caenorhabditis elegans protein is Serine/threonine-protein phosphatase 4 regulatory subunit ppfr-4.